The chain runs to 880 residues: Alanine--tRNA ligase (880 aa).

Positions 566, 570, 668, and 672 each coordinate Zn(2+).

It belongs to the class-II aminoacyl-tRNA synthetase family. Zn(2+) serves as cofactor.

Its subcellular location is the cytoplasm. The enzyme catalyses tRNA(Ala) + L-alanine + ATP = L-alanyl-tRNA(Ala) + AMP + diphosphate. Functionally, catalyzes the attachment of alanine to tRNA(Ala) in a two-step reaction: alanine is first activated by ATP to form Ala-AMP and then transferred to the acceptor end of tRNA(Ala). Also edits incorrectly charged Ser-tRNA(Ala) and Gly-tRNA(Ala) via its editing domain. This Acetivibrio thermocellus (strain ATCC 27405 / DSM 1237 / JCM 9322 / NBRC 103400 / NCIMB 10682 / NRRL B-4536 / VPI 7372) (Clostridium thermocellum) protein is Alanine--tRNA ligase.